Here is a 799-residue protein sequence, read N- to C-terminus: MKLSVDWLNEFTPLSQIPFEKVLEKINTSICEIDDVEEFKSHLSSVITVKIKSLEKHPNAEKLQTTIATDGSKEYQIVTAATNVAVGDIVPLALPGTKLDGKEILDSELRGVRSQGMYCSEKELGMALESSGVLILPKDTTLGISVRKYFLWEDTILTIDNKSITHRPDLWNHFGFARELASQLQIPLHHFPLQADTKWESGNQGLTVEKSEHAHAYYVCSIQNVNITESIPKIKSRLEKCGIRSINNVVDVSNYLLLELGQPTHFFDRSKLQSTSFTVSKSKEGESISLLDDTSPTLPNHILLIQNGETPVALAGVMGGKDSAVSESTKEIVMESAVFKREDVRYTIRKTNIRTESAVRYEKGLDSYTCLPVMKRAVQLLKENGNPNVKVFEPQGFNHTESKTVTIETNLSFLRHKLGKKISLHEVTDILQRLGFEVTTKDESLSVLVPKYRQNYDVTIPEDLVEEIGRTIGYASIRTEALSMAVETPIRNPLRELERRVKQFLALEVGFNEVYNYSFASPTDAKLEKEFEVTSLKIANEMPEEHSLLRNSLYPGLIKQTKVNQDRFEKVNLFELGRTYHKEGNDATLAQEKRWISLLSLSKCKPTDLSSIEDEFLTVRETISELFLFLNLPKFEWVKLPRTHFHPNASLVLLYDGKEVVELGILHTRFADLYDLKRRAILSKIDMEVLVQIWETYGRNSHFVPPSHFPQGQLDLSLIMNESDPTESFANLVKTLRIPELESVFVQTIFQGESVGEGKKSVTYRFILMSYDKTFTQDRFKELSDRLVETAKSNGYSLR.

Residues 40–147 (KSHLSSVITV…KDTTLGISVR (108 aa)) enclose the tRNA-binding domain. The 78-residue stretch at 402 to 479 (SKTVTIETNL…RTIGYASIRT (78 aa)) folds into the B5 domain. Positions 457, 463, 466, and 467 each coordinate Mg(2+). The FDX-ACB domain occupies 707 to 799 (SHFPQGQLDL…TAKSNGYSLR (93 aa)).

The protein belongs to the phenylalanyl-tRNA synthetase beta subunit family. Type 1 subfamily. As to quaternary structure, tetramer of two alpha and two beta subunits. Mg(2+) serves as cofactor.

Its subcellular location is the cytoplasm. It catalyses the reaction tRNA(Phe) + L-phenylalanine + ATP = L-phenylalanyl-tRNA(Phe) + AMP + diphosphate + H(+). In Leptospira biflexa serovar Patoc (strain Patoc 1 / Ames), this protein is Phenylalanine--tRNA ligase beta subunit.